We begin with the raw amino-acid sequence, 274 residues long: MATPDLRNTPSVSPEAGQAPVQLRNVVRQFGRQRVIDGLNLDIAPGEFVALLGASGSGKTTLLRTLAGLDEIDSGELRVPVARAAVFQEPRLMPWKSAWKNVVLGLRINDAKARAEAALTEVGLAHRLNAFPATLSGGEAQRVALARGLVREPKLLLLDEPFAALDALTRIRMHQLIIDLWRKHTPAVLLVTHDVDEAILLADRVIVLADGRIADGIRVDLPRQRDSGQAGFQLIRSRLLGLLGVKVHAAVDSAPQAPEQDVTLSALRRFANAR.

An ABC transporter domain is found at 21-235 (VQLRNVVRQF…DSGQAGFQLI (215 aa)). Residue 53-60 (GASGSGKT) coordinates ATP.

The protein belongs to the ABC transporter superfamily. Aliphatic sulfonates importer (TC 3.A.1.17.2) family. As to quaternary structure, the complex is composed of two ATP-binding proteins (SsuB), two transmembrane proteins (SsuC) and a solute-binding protein (SsuA).

Its subcellular location is the cell inner membrane. It catalyses the reaction ATP + H2O + aliphatic sulfonate-[sulfonate-binding protein]Side 1 = ADP + phosphate + aliphatic sulfonateSide 2 + [sulfonate-binding protein]Side 1.. Part of the ABC transporter complex SsuABC involved in aliphatic sulfonates import. Responsible for energy coupling to the transport system. This Pseudomonas syringae pv. syringae (strain B728a) protein is Aliphatic sulfonates import ATP-binding protein SsuB 2.